A 366-amino-acid chain; its full sequence is Putative type II methyltransferase M.MjaORF1200P (366 aa).

In terms of domain architecture, SAM-dependent MTase C5-type spans 5 to 366 (LKFIDLFCGC…IARVIKENLK (362 aa)). Residue Cys-133 is part of the active site.

This sequence belongs to the class I-like SAM-binding methyltransferase superfamily. C5-methyltransferase family.

It catalyses the reaction a 2'-deoxycytidine in DNA + S-adenosyl-L-methionine = a 5-methyl-2'-deoxycytidine in DNA + S-adenosyl-L-homocysteine + H(+). A putative methylase that probably protects DNA from cleavage by the MjaORF1200P endonuclease. The polypeptide is Putative type II methyltransferase M.MjaORF1200P (Methanocaldococcus jannaschii (strain ATCC 43067 / DSM 2661 / JAL-1 / JCM 10045 / NBRC 100440) (Methanococcus jannaschii)).